Reading from the N-terminus, the 186-residue chain is Crossover junction endodeoxyribonuclease RuvC (186 aa).

Catalysis depends on residues Asp7, Glu67, and Asp140. Mg(2+) is bound by residues Asp7, Glu67, and Asp140.

It belongs to the RuvC family. Homodimer which binds Holliday junction (HJ) DNA. The HJ becomes 2-fold symmetrical on binding to RuvC with unstacked arms; it has a different conformation from HJ DNA in complex with RuvA. In the full resolvosome a probable DNA-RuvA(4)-RuvB(12)-RuvC(2) complex forms which resolves the HJ. Mg(2+) serves as cofactor.

The protein resides in the cytoplasm. It catalyses the reaction Endonucleolytic cleavage at a junction such as a reciprocal single-stranded crossover between two homologous DNA duplexes (Holliday junction).. The RuvA-RuvB-RuvC complex processes Holliday junction (HJ) DNA during genetic recombination and DNA repair. Endonuclease that resolves HJ intermediates. Cleaves cruciform DNA by making single-stranded nicks across the HJ at symmetrical positions within the homologous arms, yielding a 5'-phosphate and a 3'-hydroxyl group; requires a central core of homology in the junction. The consensus cleavage sequence is 5'-(A/T)TT(C/G)-3'. Cleavage occurs on the 3'-side of the TT dinucleotide at the point of strand exchange. HJ branch migration catalyzed by RuvA-RuvB allows RuvC to scan DNA until it finds its consensus sequence, where it cleaves and resolves the cruciform DNA. This chain is Crossover junction endodeoxyribonuclease RuvC, found in Chloroherpeton thalassium (strain ATCC 35110 / GB-78).